Consider the following 413-residue polypeptide: Na(+)-translocating NADH-quinone reductase subunit B (413 aa).

Helical transmembrane passes span 55–75 (IMIM…YNAG), 128–148 (FLPI…LFCM), and 163–183 (ILFA…LGIT). FMN phosphoryl threonine is present on Thr-235. Transmembrane regions (helical) follow at residues 267–287 (IPGS…AMIV), 296–316 (IIAG…VIGS), 324–344 (MPWH…FMAT), 357–377 (WWYG…NPAY), and 380–400 (GMML…HVVI).

Belongs to the NqrB/RnfD family. Composed of six subunits; NqrA, NqrB, NqrC, NqrD, NqrE and NqrF. FMN serves as cofactor.

It is found in the cell inner membrane. The catalysed reaction is a ubiquinone + n Na(+)(in) + NADH + H(+) = a ubiquinol + n Na(+)(out) + NAD(+). Functionally, NQR complex catalyzes the reduction of ubiquinone-1 to ubiquinol by two successive reactions, coupled with the transport of Na(+) ions from the cytoplasm to the periplasm. NqrA to NqrE are probably involved in the second step, the conversion of ubisemiquinone to ubiquinol. This chain is Na(+)-translocating NADH-quinone reductase subunit B, found in Vibrio campbellii (strain ATCC BAA-1116).